Reading from the N-terminus, the 492-residue chain is N-succinylglutamate 5-semialdehyde dehydrogenase (492 aa).

220–225 (GSASTG) contacts NAD(+). Catalysis depends on residues Glu-243 and Cys-277.

The protein belongs to the aldehyde dehydrogenase family. AstD subfamily.

It carries out the reaction N-succinyl-L-glutamate 5-semialdehyde + NAD(+) + H2O = N-succinyl-L-glutamate + NADH + 2 H(+). It functions in the pathway amino-acid degradation; L-arginine degradation via AST pathway; L-glutamate and succinate from L-arginine: step 4/5. Its function is as follows. Catalyzes the NAD-dependent reduction of succinylglutamate semialdehyde into succinylglutamate. This is N-succinylglutamate 5-semialdehyde dehydrogenase from Salmonella typhimurium (strain LT2 / SGSC1412 / ATCC 700720).